The sequence spans 401 residues: Acetate kinase (401 aa).

Asparagine 9 contacts Mg(2+). ATP is bound at residue lysine 16. Arginine 88 is a binding site for substrate. The Proton donor/acceptor role is filled by aspartate 147. ATP contacts are provided by residues histidine 207 to glycine 211, aspartate 282 to arginine 284, and glycine 333 to asparagine 337. Glutamate 388 serves as a coordination point for Mg(2+).

It belongs to the acetokinase family. As to quaternary structure, homodimer. Requires Mg(2+) as cofactor. The cofactor is Mn(2+).

The protein localises to the cytoplasm. It carries out the reaction acetate + ATP = acetyl phosphate + ADP. It participates in metabolic intermediate biosynthesis; acetyl-CoA biosynthesis; acetyl-CoA from acetate: step 1/2. Functionally, catalyzes the formation of acetyl phosphate from acetate and ATP. Can also catalyze the reverse reaction. The sequence is that of Acetate kinase from Haemophilus influenzae (strain PittEE).